The following is a 224-amino-acid chain: MSSHPPIRSYVLRQGYFSHAQRHAYESLLPRYGIPFSENPIDLDSIFGRTAPKILEIGSGMGETTVEIAAQHPEKDFVAIEVHAPGIGSLLDRIEKHGLTNLRIIPHDAKLVLQHMLTGESLDGIHIFFPDPWPKARHHKRRLIQSDFVSLLCNRLKPGGYLHIATDWEDYAIHSLHVLSSEQRLINTAADYAPRPAYRPLTKFEQRGMKLGHTIRDLIFTKAA.

S-adenosyl-L-methionine contacts are provided by Glu56, Glu81, Asp108, and Asp131. The active site involves Asp131. Residues Lys135, Asp167, and 202–205 each bind substrate; that span reads TKFE.

Belongs to the class I-like SAM-binding methyltransferase superfamily. TrmB family.

The enzyme catalyses guanosine(46) in tRNA + S-adenosyl-L-methionine = N(7)-methylguanosine(46) in tRNA + S-adenosyl-L-homocysteine. It functions in the pathway tRNA modification; N(7)-methylguanine-tRNA biosynthesis. In terms of biological role, catalyzes the formation of N(7)-methylguanine at position 46 (m7G46) in tRNA. The polypeptide is tRNA (guanine-N(7)-)-methyltransferase (Nitrosomonas eutropha (strain DSM 101675 / C91 / Nm57)).